Consider the following 212-residue polypeptide: 3-isopropylmalate dehydratase small subunit (212 aa).

The protein belongs to the LeuD family. LeuD type 1 subfamily. In terms of assembly, heterodimer of LeuC and LeuD.

The enzyme catalyses (2R,3S)-3-isopropylmalate = (2S)-2-isopropylmalate. The protein operates within amino-acid biosynthesis; L-leucine biosynthesis; L-leucine from 3-methyl-2-oxobutanoate: step 2/4. Its function is as follows. Catalyzes the isomerization between 2-isopropylmalate and 3-isopropylmalate, via the formation of 2-isopropylmaleate. This is 3-isopropylmalate dehydratase small subunit from Thiobacillus denitrificans (strain ATCC 25259 / T1).